A 133-amino-acid chain; its full sequence is Small ribosomal subunit protein uS8 (133 aa).

Belongs to the universal ribosomal protein uS8 family. As to quaternary structure, part of the 30S ribosomal subunit. Contacts proteins S5 and S12.

One of the primary rRNA binding proteins, it binds directly to 16S rRNA central domain where it helps coordinate assembly of the platform of the 30S subunit. The protein is Small ribosomal subunit protein uS8 of Leptospira interrogans serogroup Icterohaemorrhagiae serovar copenhageni (strain Fiocruz L1-130).